The following is a 156-amino-acid chain: 6,7-dimethyl-8-ribityllumazine synthase (156 aa).

5-amino-6-(D-ribitylamino)uracil contacts are provided by residues F22, 56–58, and 80–82; these read AFE and AVV. 85-86 provides a ligand contact to (2S)-2-hydroxy-3-oxobutyl phosphate; sequence ET. Residue H88 is the Proton donor of the active site. F113 serves as a coordination point for 5-amino-6-(D-ribitylamino)uracil. Residue R127 participates in (2S)-2-hydroxy-3-oxobutyl phosphate binding.

This sequence belongs to the DMRL synthase family.

The catalysed reaction is (2S)-2-hydroxy-3-oxobutyl phosphate + 5-amino-6-(D-ribitylamino)uracil = 6,7-dimethyl-8-(1-D-ribityl)lumazine + phosphate + 2 H2O + H(+). The protein operates within cofactor biosynthesis; riboflavin biosynthesis; riboflavin from 2-hydroxy-3-oxobutyl phosphate and 5-amino-6-(D-ribitylamino)uracil: step 1/2. Its function is as follows. Catalyzes the formation of 6,7-dimethyl-8-ribityllumazine by condensation of 5-amino-6-(D-ribitylamino)uracil with 3,4-dihydroxy-2-butanone 4-phosphate. This is the penultimate step in the biosynthesis of riboflavin. The protein is 6,7-dimethyl-8-ribityllumazine synthase of Pediococcus pentosaceus (strain ATCC 25745 / CCUG 21536 / LMG 10740 / 183-1w).